Consider the following 151-residue polypeptide: Transcriptional regulator MraZ (151 aa).

SpoVT-AbrB domains are found at residues 5–52 (ANAI…PLDE) and 81–124 (AVDL…DEDA).

It belongs to the MraZ family. As to quaternary structure, forms oligomers.

It is found in the cytoplasm. Its subcellular location is the nucleoid. The sequence is that of Transcriptional regulator MraZ from Pseudomonas fluorescens (strain Pf0-1).